We begin with the raw amino-acid sequence, 94 residues long: Small ribosomal subunit protein uS19c (94 aa).

The protein belongs to the universal ribosomal protein uS19 family.

The protein localises to the plastid. It is found in the chloroplast. Functionally, protein S19 forms a complex with S13 that binds strongly to the 16S ribosomal RNA. The protein is Small ribosomal subunit protein uS19c of Cyanidioschyzon merolae (strain NIES-3377 / 10D) (Unicellular red alga).